The following is a 406-amino-acid chain: Bifunctional enzyme IspD/IspF (406 aa).

A 2-C-methyl-D-erythritol 4-phosphate cytidylyltransferase region spans residues 1–246 (MTQMHSTQPM…KLSAGLLPDV (246 aa)). A 2-C-methyl-D-erythritol 2,4-cyclodiphosphate synthase region spans residues 247-406 (RTGNGYDVHQ…ATVVYRGGRP (160 aa)). A divalent metal cation contacts are provided by D253 and H255. 4-CDP-2-C-methyl-D-erythritol 2-phosphate-binding positions include 253–255 (DVH) and 279–280 (HS). Residue H287 participates in a divalent metal cation binding. 4-CDP-2-C-methyl-D-erythritol 2-phosphate contacts are provided by residues 301–303 (DIG), 377–380 (TTNE), F384, and R387.

The protein in the N-terminal section; belongs to the IspD/TarI cytidylyltransferase family. IspD subfamily. This sequence in the C-terminal section; belongs to the IspF family. Requires a divalent metal cation as cofactor.

It carries out the reaction 2-C-methyl-D-erythritol 4-phosphate + CTP + H(+) = 4-CDP-2-C-methyl-D-erythritol + diphosphate. The catalysed reaction is 4-CDP-2-C-methyl-D-erythritol 2-phosphate = 2-C-methyl-D-erythritol 2,4-cyclic diphosphate + CMP. It participates in isoprenoid biosynthesis; isopentenyl diphosphate biosynthesis via DXP pathway; isopentenyl diphosphate from 1-deoxy-D-xylulose 5-phosphate: step 2/6. It functions in the pathway isoprenoid biosynthesis; isopentenyl diphosphate biosynthesis via DXP pathway; isopentenyl diphosphate from 1-deoxy-D-xylulose 5-phosphate: step 4/6. Functionally, bifunctional enzyme that catalyzes the formation of 4-diphosphocytidyl-2-C-methyl-D-erythritol from CTP and 2-C-methyl-D-erythritol 4-phosphate (MEP) (IspD), and catalyzes the conversion of 4-diphosphocytidyl-2-C-methyl-D-erythritol 2-phosphate (CDP-ME2P) to 2-C-methyl-D-erythritol 2,4-cyclodiphosphate (ME-CPP) with a corresponding release of cytidine 5-monophosphate (CMP) (IspF). In Rhizobium rhizogenes (strain K84 / ATCC BAA-868) (Agrobacterium radiobacter), this protein is Bifunctional enzyme IspD/IspF.